A 209-amino-acid chain; its full sequence is Streptogramin A acetyltransferase (209 aa).

His-82 is an active-site residue.

This sequence belongs to the transferase hexapeptide repeat family. As to quaternary structure, homohexamer.

Inactivates the A compounds of streptogramin antibiotics by acetylation, thus providing resistance to these antibiotics. The sequence is that of Streptogramin A acetyltransferase (vatD) from Enterococcus faecium (Streptococcus faecium).